The sequence spans 250 residues: Bacteriorhodopsin (250 aa).

The Extracellular segment spans residues 1 to 18; the sequence is MCCAALAPPMAATVGPES. A helical transmembrane segment spans residues 19–37; sequence IWLWIGTIGMTLGTLYFVG. Residues 38-51 are Cytoplasmic-facing; it reads RGRGVRDRKMQEFY. Residues 52–70 form a helical membrane-spanning segment; the sequence is IITIFITTIAAAMYFAMAT. At 71–86 the chain is on the extracellular side; the sequence is GFGVTEVMVGDEALTI. The helical transmembrane segment at 87–104 threads the bilayer; sequence YWARYADWLFTTPLLLLD. Residues 105-115 are Cytoplasmic-facing; the sequence is LSLLAGANRNT. The helical transmembrane segment at 116–135 threads the bilayer; the sequence is IATLIGLDVFMIGTGAIAAL. Over 136–142 the chain is Extracellular; it reads SSTPGTR. The helical transmembrane segment at 143–162 threads the bilayer; the sequence is IAWWAISTGALLALLYVLVG. Over 163 to 180 the chain is Cytoplasmic; the sequence is TLSENARNRAPEVASLFG. A helical transmembrane segment spans residues 181–199; sequence RLRNLVIALWFLYPVVWIL. Residues 200-212 lie on the Extracellular side of the membrane; that stretch reads GTEGTFGILPLYW. Residues 213 to 232 traverse the membrane as a helical segment; sequence ETAAFMVLDLSAKVGFGVIL. Position 225 is an N6-(retinylidene)lysine (Lys-225). Residues 233–250 are Cytoplasmic-facing; the sequence is LQSRSVLERVATPTAAPT.

The protein belongs to the archaeal/bacterial/fungal opsin family.

The protein localises to the cell membrane. Its function is as follows. Light-driven proton pump. The sequence is that of Bacteriorhodopsin (bop) from Haloterrigena sp. (strain arg-4).